The primary structure comprises 262 residues: Type III pantothenate kinase (262 aa).

9–16 lines the ATP pocket; that stretch reads DAGNSRIK. Substrate-binding positions include Tyr96 and 103 to 106; that span reads GSDR. The active-site Proton acceptor is Asp105. An ATP-binding site is contributed by Thr129. A substrate-binding site is contributed by Thr189.

The protein belongs to the type III pantothenate kinase family. As to quaternary structure, homodimer. NH4(+) is required as a cofactor. It depends on K(+) as a cofactor.

It is found in the cytoplasm. The enzyme catalyses (R)-pantothenate + ATP = (R)-4'-phosphopantothenate + ADP + H(+). Its pathway is cofactor biosynthesis; coenzyme A biosynthesis; CoA from (R)-pantothenate: step 1/5. In terms of biological role, catalyzes the phosphorylation of pantothenate (Pan), the first step in CoA biosynthesis. The protein is Type III pantothenate kinase of Burkholderia ambifaria (strain MC40-6).